A 1279-amino-acid polypeptide reads, in one-letter code: ATP-dependent helicase/nuclease subunit A (1279 aa).

Residues T4–R499 enclose the UvrD-like helicase ATP-binding domain. Residue A25 to T32 coordinates ATP. Residues E526–G853 enclose the UvrD-like helicase C-terminal domain.

It belongs to the helicase family. AddA subfamily. In terms of assembly, heterodimer of AddA and AddB/RexB. Requires Mg(2+) as cofactor.

It catalyses the reaction Couples ATP hydrolysis with the unwinding of duplex DNA by translocating in the 3'-5' direction.. The enzyme catalyses ATP + H2O = ADP + phosphate + H(+). In terms of biological role, the heterodimer acts as both an ATP-dependent DNA helicase and an ATP-dependent, dual-direction single-stranded exonuclease. Recognizes the chi site generating a DNA molecule suitable for the initiation of homologous recombination. The AddA nuclease domain is required for chi fragment generation; this subunit has the helicase and 3' -&gt; 5' nuclease activities. This is ATP-dependent helicase/nuclease subunit A from Clostridium botulinum (strain ATCC 19397 / Type A).